The sequence spans 112 residues: Histone H3-4 (112 aa).

The tract at residues Gln1–Arg31 is disordered.

This sequence belongs to the histone H3 family. As to quaternary structure, the nucleosome is a histone octamer containing two molecules each of H2A, H2B, H3 and H4 assembled in one H3-H4 heterotetramer and two H2A-H2B heterodimers. The octamer wraps approximately 147 bp of DNA.

It is found in the nucleus. The protein resides in the chromosome. Core component of nucleosome. Nucleosomes wrap and compact DNA into chromatin, limiting DNA accessibility to the cellular machineries which require DNA as a template. Histones thereby play a central role in transcription regulation, DNA repair, DNA replication and chromosomal stability. DNA accessibility is regulated via a complex set of post-translational modifications of histones, also called histone code, and nucleosome remodeling. This is Histone H3-4 (H3-4) from Stylonychia lemnae (Ciliate).